Here is a 99-residue protein sequence, read N- to C-terminus: NADH-quinone oxidoreductase subunit K (99 aa).

3 helical membrane passes run 3-23, 28-48, and 59-79; these read VTAY…GVLI, IVVF…LVAF, and IAAF…LAII.

This sequence belongs to the complex I subunit 4L family. As to quaternary structure, NDH-1 is composed of 14 different subunits. Subunits NuoA, H, J, K, L, M, N constitute the membrane sector of the complex.

The protein resides in the cell membrane. It catalyses the reaction a quinone + NADH + 5 H(+)(in) = a quinol + NAD(+) + 4 H(+)(out). Functionally, NDH-1 shuttles electrons from NADH, via FMN and iron-sulfur (Fe-S) centers, to quinones in the respiratory chain. The immediate electron acceptor for the enzyme in this species is believed to be a menaquinone. Couples the redox reaction to proton translocation (for every two electrons transferred, four hydrogen ions are translocated across the cytoplasmic membrane), and thus conserves the redox energy in a proton gradient. This Nocardioides sp. (strain ATCC BAA-499 / JS614) protein is NADH-quinone oxidoreductase subunit K.